The following is a 71-amino-acid chain: Conotoxin Ca5.1 (71 aa).

Residues 1-19 (MRCVPVFIILLLLASPAAS) form the signal peptide. The propeptide occupies 20-56 (DPLEKRIQSDLIRAALEDADTKNDPRILEDIVSTALA).

Belongs to the conotoxin T superfamily. Post-translationally, contains 2 disulfide bonds that can be either 'C1-C3, C2-C4' or 'C1-C4, C2-C3', since these disulfide connectivities have been observed for conotoxins with cysteine framework V (for examples, see AC P0DQQ7 and AC P81755). Expressed by the venom duct.

It is found in the secreted. This Conus caracteristicus (Characteristic cone) protein is Conotoxin Ca5.1.